A 349-amino-acid polypeptide reads, in one-letter code: GTP 3',8-cyclase (349 aa).

The region spanning 26–245 (GFGRAVTYLR…SSFWTLTDIP (220 aa)) is the Radical SAM core domain. Arg35 lines the GTP pocket. 2 residues coordinate [4Fe-4S] cluster: Cys42 and Cys46. Tyr48 contacts S-adenosyl-L-methionine. Position 49 (Cys49) interacts with [4Fe-4S] cluster. Arg84 lines the GTP pocket. Gly88 is an S-adenosyl-L-methionine binding site. Thr118 is a GTP binding site. Ser142 is an S-adenosyl-L-methionine binding site. Lys178 is a GTP binding site. Met212 contributes to the S-adenosyl-L-methionine binding site. Positions 275 and 278 each coordinate [4Fe-4S] cluster. 280–282 (RVR) serves as a coordination point for GTP. Cys292 is a binding site for [4Fe-4S] cluster.

The protein belongs to the radical SAM superfamily. MoaA family. Monomer and homodimer. [4Fe-4S] cluster is required as a cofactor.

The enzyme catalyses GTP + AH2 + S-adenosyl-L-methionine = (8S)-3',8-cyclo-7,8-dihydroguanosine 5'-triphosphate + 5'-deoxyadenosine + L-methionine + A + H(+). Its pathway is cofactor biosynthesis; molybdopterin biosynthesis. Functionally, catalyzes the cyclization of GTP to (8S)-3',8-cyclo-7,8-dihydroguanosine 5'-triphosphate. The polypeptide is GTP 3',8-cyclase (Caulobacter vibrioides (strain ATCC 19089 / CIP 103742 / CB 15) (Caulobacter crescentus)).